A 216-amino-acid polypeptide reads, in one-letter code: Ceramide-1-phosphate transfer protein (216 aa).

Positions 56, 60, 108, 112, and 152 each coordinate an N-acylsphingoid base 1-phosphate.

Belongs to the GLTP family.

The protein resides in the cytoplasm. The protein localises to the cytosol. Its subcellular location is the golgi apparatus. It localises to the trans-Golgi network membrane. It is found in the cell membrane. The protein resides in the endosome membrane. The protein localises to the nucleus outer membrane. The enzyme catalyses N-(hexadecanoyl)-sphing-4-enine-1-phosphate(in) = N-(hexadecanoyl)-sphing-4-enine-1-phosphate(out). It catalyses the reaction N-(9Z-octadecenoyl)-sphing-4-enine-1-phosphate(in) = N-(9Z-octadecenoyl)-sphing-4-enine-1-phosphate(out). Functionally, mediates the intracellular transfer of ceramide-1-phosphate (C1P) between organelle membranes and the cell membrane. Required for normal structure of the Golgi stacks. Can bind phosphoceramides with a variety of aliphatic chains, but has a preference for lipids with saturated C16:0 or monounsaturated C18:1 aliphatic chains, and is inefficient with phosphoceramides containing lignoceryl (C24:0). Plays a role in the regulation of the cellular levels of ceramide-1-phosphate, and thereby contributes to the regulation of phospholipase PLA2G4A activity and the release of arachidonic acid. Has no activity with galactosylceramide, lactosylceramide, sphingomyelin, phosphatidylcholine, phosphatidic acid and ceramide. C1P transfer is stimulated by phosphatidylserine in C1P source vesicles. Regulates autophagy, inflammasome mediated IL1B and IL18 processing, and pyroptosis, but not apoptosis. This Mus musculus (Mouse) protein is Ceramide-1-phosphate transfer protein.